Reading from the N-terminus, the 516-residue chain is Cytochrome P450 6d1 (516 aa).

Cys461 contacts heme.

The protein belongs to the cytochrome P450 family. The cofactor is heme.

The protein localises to the endoplasmic reticulum membrane. It is found in the microsome membrane. In terms of biological role, metabolizes pyrethroid insecticides and other xenobiotics. This chain is Cytochrome P450 6d1 (CYP6D1), found in Musca domestica (House fly).